The following is a 209-amino-acid chain: Thiamine-phosphate synthase (209 aa).

4-amino-2-methyl-5-(diphosphooxymethyl)pyrimidine-binding positions include 36–40 (QYRDK) and asparagine 68. Mg(2+) is bound by residues aspartate 69 and aspartate 87. Threonine 106 lines the 4-amino-2-methyl-5-(diphosphooxymethyl)pyrimidine pocket. 133–135 (SST) lines the 2-[(2R,5Z)-2-carboxy-4-methylthiazol-5(2H)-ylidene]ethyl phosphate pocket. Lysine 136 contributes to the 4-amino-2-methyl-5-(diphosphooxymethyl)pyrimidine binding site. Glycine 163 provides a ligand contact to 2-[(2R,5Z)-2-carboxy-4-methylthiazol-5(2H)-ylidene]ethyl phosphate.

It belongs to the thiamine-phosphate synthase family. Requires Mg(2+) as cofactor.

The catalysed reaction is 2-[(2R,5Z)-2-carboxy-4-methylthiazol-5(2H)-ylidene]ethyl phosphate + 4-amino-2-methyl-5-(diphosphooxymethyl)pyrimidine + 2 H(+) = thiamine phosphate + CO2 + diphosphate. The enzyme catalyses 2-(2-carboxy-4-methylthiazol-5-yl)ethyl phosphate + 4-amino-2-methyl-5-(diphosphooxymethyl)pyrimidine + 2 H(+) = thiamine phosphate + CO2 + diphosphate. It catalyses the reaction 4-methyl-5-(2-phosphooxyethyl)-thiazole + 4-amino-2-methyl-5-(diphosphooxymethyl)pyrimidine + H(+) = thiamine phosphate + diphosphate. The protein operates within cofactor biosynthesis; thiamine diphosphate biosynthesis; thiamine phosphate from 4-amino-2-methyl-5-diphosphomethylpyrimidine and 4-methyl-5-(2-phosphoethyl)-thiazole: step 1/1. Functionally, condenses 4-methyl-5-(beta-hydroxyethyl)thiazole monophosphate (THZ-P) and 2-methyl-4-amino-5-hydroxymethyl pyrimidine pyrophosphate (HMP-PP) to form thiamine monophosphate (TMP). This chain is Thiamine-phosphate synthase, found in Pseudomonas aeruginosa (strain UCBPP-PA14).